The chain runs to 150 residues: Large ribosomal subunit protein uL11 (150 aa).

This sequence belongs to the universal ribosomal protein uL11 family. In terms of assembly, part of the ribosomal stalk of the 50S ribosomal subunit. Interacts with L10 and the large rRNA to form the base of the stalk. L10 forms an elongated spine to which L12 dimers bind in a sequential fashion forming a multimeric L10(L12)X complex. Post-translationally, one or more lysine residues are methylated.

Forms part of the ribosomal stalk which helps the ribosome interact with GTP-bound translation factors. The sequence is that of Large ribosomal subunit protein uL11 from Cereibacter sphaeroides (strain KD131 / KCTC 12085) (Rhodobacter sphaeroides).